The sequence spans 711 residues: MINPIVKTIELPDGRTITLETGKLAKQADGSVMLRMGNTMLLATVCAAKDAVPGTDFMPLQVEYKEKYSAFGRFPGGFTKREGKASDYEILTCRLVDRALRPLFPDNFHAEVYVNIVLFSADGIDMPDALAGLAASAALAVSDIPFGGPISEVRVARIDGQFVINPTFEQLEKADMDLMVAATYDNIMMVEGEMQEVSEQDLLAAMKAAHEAIKVHCKAQMELMEEVGSTVKREYCHEENDEDLRKAVREACYDKAYAIAASGNRNKHERQDAFDAIRDEFKTQYTEEELEEKGALIDRYYHDVEKEAMRRCILDEGKRLDGRKTTEIRPIWCEVGYLPGPHGSAIFTRGETQSLTSVTLGTKLDEKIVDDVLDQHRERFLLHYNFPPYSTGEAKAQRGVGRREIGHGHLAWRALKGQIPAGYPYTVRVVSDIMESNGSSSMATVCAGTLALMDAGVAMKKPVSGIAMGLIKNAGEEKYAVLSDILGDEDHLGDMDFKVTGTRDGITATQMDIKVDGLSFEILEKALLQAKEGREHILNKLTECIAEPRKDLKPHAPRIETMTIPKEFIGAIIGPGGKIIQGMQEETGATITIEETDGVGRIEIAGTNKKCIDDAMRIIKGIVAVPEVGEVYVGKVRSVMPYGVFVEFLPGKDGLLHISEIDWKRLETIEEAGLKEGDEIEVKLLDIDPKTGKFKLSHKVLLPRPEKQEKK.

Residues Asp490 and Asp496 each contribute to the Mg(2+) site. Positions 557–619 constitute a KH domain; sequence PRIETMTIPK…KCIDDAMRII (63 aa). The S1 motif domain maps to 629-699; the sequence is GEVYVGKVRS…KTGKFKLSHK (71 aa).

Belongs to the polyribonucleotide nucleotidyltransferase family. Mg(2+) serves as cofactor.

It is found in the cytoplasm. It carries out the reaction RNA(n+1) + phosphate = RNA(n) + a ribonucleoside 5'-diphosphate. Its function is as follows. Involved in mRNA degradation. Catalyzes the phosphorolysis of single-stranded polyribonucleotides processively in the 3'- to 5'-direction. The polypeptide is Polyribonucleotide nucleotidyltransferase (Phocaeicola vulgatus (strain ATCC 8482 / DSM 1447 / JCM 5826 / CCUG 4940 / NBRC 14291 / NCTC 11154) (Bacteroides vulgatus)).